The sequence spans 1784 residues: Histone acetyltransferase KAT6B (1784 aa).

Residues 1-77 enclose the SAMD1-like winged helix (WH) domain; it reads MVKLANPLYT…LASYKDPDNP (77 aa). Residues 72-98 form a disordered region; that stretch reads KDPDNPGRFSSVKPGTFPKSTKESRGS. The H15 domain maps to 103–176; that stretch reads RNVDWNKLLR…KDGPQYRVNY (74 aa). 2 PHD-type zinc fingers span residues 213–272 and 269–320; these read IPIC…CKTC and CKTC…CRPK. Ser355 is subject to Phosphoserine. Positions 361–425 are negatively regulates HAT activity; it reads GSMNAFTGRG…ECESGVEDCG (65 aa). Residue Lys381 forms a Glycyl lysine isopeptide (Lys-Gly) (interchain with G-Cter in SUMO2) linkage. Residues 423–697 enclose the MYST-type HAT domain; that stretch reads DCGRYPSVIE…LDPDSLRWTP (275 aa). The catalytic stretch occupies residues 426-716; that stretch reads RYPSVIEFGK…EEEREAEKEA (291 aa). The C2HC MYST-type zinc finger occupies 456–481; it reads LYLCEFCLKYMKSKNILLRHSKKCGW. Positions 460 to 716 are interaction with BRPF1; it reads EFCLKYMKSK…EEEREAEKEA (257 aa). Position 523 is an N6-acetyllysine; by autocatalysis (Lys523). Acetyl-CoA contacts are provided by residues 564 to 568 and 573 to 579; these read SCIMI and QRQGFGR. The active-site Proton donor/acceptor is Glu599. Ser603 is an acetyl-CoA binding site. Disordered regions lie at residues 730–884, 904–1163, 1195–1273, and 1291–1330; these read EQEV…RPMP, RKAF…FKEV, SCNS…FQDC, and QSPQ…SPSV. The span at 733-751 shows a compositional bias: polar residues; it reads VLSTRANSRQSPAKVQSKN. N6-acetyllysine occurs at positions 746, 750, and 752. At Ser756 the chain carries Phosphoserine. A compositionally biased stretch (acidic residues) spans 777–819; the sequence is SEEEEEEEEDEEEEDEEEEEEEEEDEEEEEEEEEEEEEEEEEN. A compositionally biased stretch (polar residues) spans 820–831; sequence IQSSPPRLTKPQ. Basic residues predominate over residues 835–854; that stretch reads IKRKRPFVLKKKRGRKRRRI. Positions 856–869 are enriched in low complexity; sequence SSVTTETISETTEV. Residues 904–914 are compositionally biased toward basic residues; that stretch reads RKAFQHQPGKK. Composition is skewed to basic and acidic residues over residues 938-957 and 1055-1064; these read MNDD…EPLK and EKPEDDLIKP. The span at 1065–1087 shows a compositional bias: acidic residues; sequence EEEEEEEEEEEEEEGEEEEEEGG. 2 stretches are compositionally biased toward basic and acidic residues: residues 1088 to 1101 and 1107 to 1118; these read NVEK…SQEK and SPEKEDSARLDD. Residues 1119–1128 show a composition bias toward acidic residues; that stretch reads HEEEEEEDEE. Residues 1144–1163 are compositionally biased toward basic and acidic residues; that stretch reads HMESAEVEKEELPRESFKEV. Residues 1209 to 1218 show a composition bias toward acidic residues; sequence AVPESDEEPP. Positions 1224–1240 are enriched in basic and acidic residues; the sequence is QKQDQKNSKEVDTEFKE. 2 stretches are compositionally biased toward polar residues: residues 1251–1263 and 1291–1302; these read ETVQ…TQES and QSPQIATTLDDC. Positions 1271–1784 are interaction with RUNX1 and RUNX2; sequence QDCAETQEAC…QSLNGSYMRR (514 aa). Residues 1305-1322 show a composition bias toward low complexity; sequence SDHSSPVSSVHSHPGQSV.

This sequence belongs to the MYST (SAS/MOZ) family. In terms of assembly, component of the MOZ/MORF complex composed at least of ING5, KAT6A, KAT6B, MEAF6 and one of BRPF1, BRD1/BRPF2 and BRPF3. Interacts with RUNX1 and RUNX2. In terms of processing, autoacetylation at Lys-523 is required for proper function.

The protein localises to the nucleus. The enzyme catalyses L-lysyl-[protein] + acetyl-CoA = N(6)-acetyl-L-lysyl-[protein] + CoA + H(+). In terms of biological role, histone acetyltransferase which may be involved in both positive and negative regulation of transcription. Required for RUNX2-dependent transcriptional activation. May be involved in cerebral cortex development. Component of the MOZ/MORF complex which has a histone H3 acetyltransferase activity. This Macaca fascicularis (Crab-eating macaque) protein is Histone acetyltransferase KAT6B (KAT6B).